The sequence spans 195 residues: Glycerol-3-phosphate acyltransferase (195 aa).

The next 5 helical transmembrane spans lie at 2–22 (LWIF…GLFI), 52–72 (YGVA…LMAY), 78–98 (WIFI…SIFM), 112–132 (VFLA…LAVI), and 145–165 (FAVA…VPLA).

It belongs to the PlsY family. As to quaternary structure, probably interacts with PlsX.

The protein resides in the cell inner membrane. The catalysed reaction is an acyl phosphate + sn-glycerol 3-phosphate = a 1-acyl-sn-glycero-3-phosphate + phosphate. Its pathway is lipid metabolism; phospholipid metabolism. Catalyzes the transfer of an acyl group from acyl-phosphate (acyl-PO(4)) to glycerol-3-phosphate (G3P) to form lysophosphatidic acid (LPA). This enzyme utilizes acyl-phosphate as fatty acyl donor, but not acyl-CoA or acyl-ACP. This chain is Glycerol-3-phosphate acyltransferase, found in Maridesulfovibrio salexigens (strain ATCC 14822 / DSM 2638 / NCIMB 8403 / VKM B-1763) (Desulfovibrio salexigens).